We begin with the raw amino-acid sequence, 142 residues long: Large ribosomal subunit protein uL13 (142 aa).

The protein belongs to the universal ribosomal protein uL13 family. Part of the 50S ribosomal subunit.

Functionally, this protein is one of the early assembly proteins of the 50S ribosomal subunit, although it is not seen to bind rRNA by itself. It is important during the early stages of 50S assembly. The protein is Large ribosomal subunit protein uL13 of Francisella tularensis subsp. holarctica (strain FTNF002-00 / FTA).